Reading from the N-terminus, the 1024-residue chain is Beta-galactosidase (1024 aa).

Residues N103 and D202 each contribute to the substrate site. Position 202 (D202) interacts with Na(+). Mg(2+) is bound by residues E417, H419, and E462. Substrate is bound by residues E462 and 538-541 (EYAH). E462 serves as the catalytic Proton donor. E538 serves as the catalytic Nucleophile. N598 lines the Mg(2+) pocket. Residues F602 and N605 each contribute to the Na(+) site. Residues N605 and W1000 each contribute to the substrate site.

The protein belongs to the glycosyl hydrolase 2 family. Homotetramer. Mg(2+) is required as a cofactor. Requires Na(+) as cofactor.

The enzyme catalyses Hydrolysis of terminal non-reducing beta-D-galactose residues in beta-D-galactosides.. The sequence is that of Beta-galactosidase from Escherichia coli (strain ATCC 8739 / DSM 1576 / NBRC 3972 / NCIMB 8545 / WDCM 00012 / Crooks).